Reading from the N-terminus, the 134-residue chain is SYSMEHFRWGKPVGKKRRPVKVYPNGAEGESAEAFPLEFXXELARERPEPARGPEGPDEGAATQADLDNGLVAEVEATSAEKKDEGPYKMEHFRWGSPAKDKRYGGFMTSEKSQTPLVTLFKNAIIKNAYKKGH.

Serine 1 carries the N-acetylserine modification. Position 13 is a valine amide (valine 13). Serine 31 is subject to Phosphoserine. 2 stretches are compositionally biased toward basic and acidic residues: residues 43–52 (LARERPEPAR) and 79–104 (SAEKKDEGPYKMEHFRWGSPAKDKRY). The tract at residues 43–107 (LARERPEPAR…PAKDKRYGGF (65 aa)) is disordered.

It belongs to the POMC family. Specific enzymatic cleavages at paired basic residues yield the different active peptides. In terms of tissue distribution, ACTH and MSH are produced by the pituitary gland.

Its subcellular location is the secreted. Stimulates the adrenal glands to release cortisol. In terms of biological role, anorexigenic peptide. Increases the pigmentation of skin by increasing melanin production in melanocytes. Functionally, increases the pigmentation of skin by increasing melanin production in melanocytes. Its function is as follows. Endogenous orexigenic opiate. Endogenous opiate. The sequence is that of Pro-opiomelanocortin (POMC) from Loxodonta africana (African elephant).